A 187-amino-acid polypeptide reads, in one-letter code: MTNEFEILKPGKLLLASANLLDPNFKRTVLLMCEHNEEGSIGFILNKPMEFKVCEAISGFDEIDEPLHMGGPVQVDTVHVLHTRGDVIDGAVEVIPGLFWGGDKEQLSYLINTGVIKASEVRFFLGYAGWSAGQLEAEFEEGSWYTADASSEQVFTDEYERMWSRSVRSKGGEYCYVANSPELPGMN.

Belongs to the UPF0301 (AlgH) family.

The chain is UPF0301 protein CT0663 from Chlorobaculum tepidum (strain ATCC 49652 / DSM 12025 / NBRC 103806 / TLS) (Chlorobium tepidum).